Here is a 638-residue protein sequence, read N- to C-terminus: Leucine-rich repeat-containing protein 63 (638 aa).

Disordered stretches follow at residues 220 to 241 (VPST…PSAA) and 306 to 325 (TTAA…TVQR). LRR repeat units follow at residues 389–412 (AFQL…ILYL), 413–435 (QNLQ…IHLL), 437–458 (YLRI…LFCL), 460–481 (YLEE…IQKL), 482–504 (RSLE…ILKL), and 532–556 (LTQI…VRKS).

The polypeptide is Leucine-rich repeat-containing protein 63 (Mus musculus (Mouse)).